We begin with the raw amino-acid sequence, 396 residues long: Ribosomal RNA large subunit methyltransferase I (396 aa).

The 80-residue stretch at 2–81 (SVRLVLAKGR…ESIDIAFFSR (80 aa)) folds into the PUA domain.

Belongs to the methyltransferase superfamily. RlmI family.

It localises to the cytoplasm. It catalyses the reaction cytidine(1962) in 23S rRNA + S-adenosyl-L-methionine = 5-methylcytidine(1962) in 23S rRNA + S-adenosyl-L-homocysteine + H(+). Functionally, specifically methylates the cytosine at position 1962 (m5C1962) of 23S rRNA. This is Ribosomal RNA large subunit methyltransferase I from Shigella boydii serotype 18 (strain CDC 3083-94 / BS512).